Here is a 398-residue protein sequence, read N- to C-terminus: Stearoyl-[acyl-carrier-protein] 9-desaturase, chloroplastic (398 aa).

A chloroplast-targeting transit peptide spans 1-34 (MALKLNPLASQPYNFPSSARPPISTFRSPKFLCL). Residues glutamate 140, glutamate 178, histidine 181, glutamate 231, glutamate 264, and histidine 267 each coordinate Fe cation.

It belongs to the fatty acid desaturase type 2 family. Homodimer. Fe(2+) serves as cofactor.

Its subcellular location is the plastid. It is found in the chloroplast. It carries out the reaction octadecanoyl-[ACP] + 2 reduced [2Fe-2S]-[ferredoxin] + O2 + 2 H(+) = (9Z)-octadecenoyl-[ACP] + 2 oxidized [2Fe-2S]-[ferredoxin] + 2 H2O. Its pathway is lipid metabolism; fatty acid metabolism. Functionally, converts stearoyl-ACP to oleoyl-ACP by introduction of a cis double bond between carbons 9 and 10 of the acyl chain. This Brassica napus (Rape) protein is Stearoyl-[acyl-carrier-protein] 9-desaturase, chloroplastic.